Reading from the N-terminus, the 292-residue chain is 4-hydroxy-tetrahydrodipicolinate synthase (292 aa).

Residue threonine 45 participates in pyruvate binding. The active-site Proton donor/acceptor is tyrosine 133. The active-site Schiff-base intermediate with substrate is the lysine 161. Pyruvate is bound at residue isoleucine 203.

This sequence belongs to the DapA family. As to quaternary structure, homotetramer; dimer of dimers.

Its subcellular location is the cytoplasm. It carries out the reaction L-aspartate 4-semialdehyde + pyruvate = (2S,4S)-4-hydroxy-2,3,4,5-tetrahydrodipicolinate + H2O + H(+). It participates in amino-acid biosynthesis; L-lysine biosynthesis via DAP pathway; (S)-tetrahydrodipicolinate from L-aspartate: step 3/4. Functionally, catalyzes the condensation of (S)-aspartate-beta-semialdehyde [(S)-ASA] and pyruvate to 4-hydroxy-tetrahydrodipicolinate (HTPA). This Vibrio vulnificus (strain CMCP6) protein is 4-hydroxy-tetrahydrodipicolinate synthase.